A 546-amino-acid chain; its full sequence is Probable protein kinase UbiB (546 aa).

One can recognise a Protein kinase domain in the interval 124-502 (DFDIKPLASA…QARQGQSRYL (379 aa)). ATP is bound by residues 130–138 (LASASIAQV) and Lys-153. Asp-288 acts as the Proton acceptor in catalysis. Helical transmembrane passes span 499-519 (SRYL…LLIS) and 521-541 (VEAD…WIIG).

Belongs to the ABC1 family. UbiB subfamily.

The protein resides in the cell inner membrane. Its pathway is cofactor biosynthesis; ubiquinone biosynthesis [regulation]. Functionally, is probably a protein kinase regulator of UbiI activity which is involved in aerobic coenzyme Q (ubiquinone) biosynthesis. The polypeptide is Probable protein kinase UbiB (Pectobacterium carotovorum subsp. carotovorum (strain PC1)).